The following is a 204-amino-acid chain: Peptide deformylase (204 aa).

Positions 131 and 174 each coordinate Fe cation. Glutamate 175 is an active-site residue. Histidine 178 lines the Fe cation pocket.

Belongs to the polypeptide deformylase family. The cofactor is Fe(2+).

It catalyses the reaction N-terminal N-formyl-L-methionyl-[peptide] + H2O = N-terminal L-methionyl-[peptide] + formate. In terms of biological role, removes the formyl group from the N-terminal Met of newly synthesized proteins. Requires at least a dipeptide for an efficient rate of reaction. N-terminal L-methionine is a prerequisite for activity but the enzyme has broad specificity at other positions. The sequence is that of Peptide deformylase from Streptococcus equi subsp. zooepidemicus (strain MGCS10565).